Here is a 98-residue protein sequence, read N- to C-terminus: Alpha-elicitin DRE-alpha (98 aa).

3 disulfides stabilise this stretch: C3-C71, C27-C56, and C51-C95.

This sequence belongs to the elicitin family.

Its subcellular location is the secreted. Its function is as follows. Induces local and distal defense responses (incompatible hypersensitive reaction) in plants from the solanaceae and cruciferae families. Elicits leaf necrosis and causes the accumulation of pathogenesis-related proteins. Might interact with the lipidic molecules of the plasma membrane. This Phytophthora drechsleri protein is Alpha-elicitin DRE-alpha.